The chain runs to 342 residues: Dihydroorotate dehydrogenase (quinone) (342 aa).

FMN-binding positions include 60-64 (AGLDK) and threonine 84. Lysine 64 contributes to the substrate binding site. Substrate is bound at residue 109–113 (NRMGF). FMN-binding residues include asparagine 137 and asparagine 170. Residue asparagine 170 participates in substrate binding. Residue serine 173 is the Nucleophile of the active site. Asparagine 175 serves as a coordination point for substrate. The FMN site is built by lysine 215 and threonine 243. 244-245 (NT) contacts substrate. Residues glycine 266, glycine 295, and 316-317 (YS) contribute to the FMN site.

This sequence belongs to the dihydroorotate dehydrogenase family. Type 2 subfamily. In terms of assembly, monomer. FMN serves as cofactor.

Its subcellular location is the cell membrane. The enzyme catalyses (S)-dihydroorotate + a quinone = orotate + a quinol. It participates in pyrimidine metabolism; UMP biosynthesis via de novo pathway; orotate from (S)-dihydroorotate (quinone route): step 1/1. Its function is as follows. Catalyzes the conversion of dihydroorotate to orotate with quinone as electron acceptor. The sequence is that of Dihydroorotate dehydrogenase (quinone) from Nitrosomonas eutropha (strain DSM 101675 / C91 / Nm57).